Consider the following 268-residue polypeptide: Regulatory protein zeste (268 aa).

Residues 1 to 72 (TAEEKEVLYT…WLNSRLRKQY (72 aa)) mediate DNA binding. Positions 94-108 (VSVASAVPQQQQQQH) are enriched in low complexity. The tract at residues 94–133 (VSVASAVPQQQQQQHHQQHDNVKEEPEYQISPDASEHNPQ) is disordered. Basic and acidic residues predominate over residues 110–119 (QQHDNVKEEP).

In terms of assembly, self-associates forming complexes of several hundred monomers.

It is found in the nucleus. Involved in transvection phenomena (= synapsis-dependent gene expression), where the synaptic pairing of chromosomes carrying genes with which zeste interacts influences the expression of these genes. Zeste binds to DNA and stimulates transcription from a nearby promoter. The sequence is that of Regulatory protein zeste (z) from Drosophila sechellia (Fruit fly).